The primary structure comprises 280 residues: Shikimate dehydrogenase (NADP(+)) (280 aa).

Shikimate contacts are provided by residues 15–17 (SMS) and threonine 62. Lysine 66 functions as the Proton acceptor in the catalytic mechanism. Glutamate 78 provides a ligand contact to NADP(+). The shikimate site is built by asparagine 87 and aspartate 102. Residues 127–131 (GAGGA), 151–156 (NRTLEK), and isoleucine 219 each bind NADP(+). Tyrosine 221 contributes to the shikimate binding site. Residue glycine 242 participates in NADP(+) binding.

This sequence belongs to the shikimate dehydrogenase family. Homodimer.

The enzyme catalyses shikimate + NADP(+) = 3-dehydroshikimate + NADPH + H(+). Its pathway is metabolic intermediate biosynthesis; chorismate biosynthesis; chorismate from D-erythrose 4-phosphate and phosphoenolpyruvate: step 4/7. Functionally, involved in the biosynthesis of the chorismate, which leads to the biosynthesis of aromatic amino acids. Catalyzes the reversible NADPH linked reduction of 3-dehydroshikimate (DHSA) to yield shikimate (SA). The protein is Shikimate dehydrogenase (NADP(+)) of Bacillus subtilis (strain 168).